The sequence spans 83 residues: Protein Vpu (83 aa).

Residues 1-4 (MLSL) lie on the Extracellular side of the membrane. A helical membrane pass occupies residues 5-25 (GFIALGAAVSIAVIVWALLYR). Residues 26 to 83 (EYKKIKLQEKIKHIRQRIREREEDSGNESDGDAEWLDGDEEWLVTLLSSSKLDQGNWV) are Cytoplasmic-facing. Residues S50 and S54 each carry the phosphoserine; by host CK2 modification.

Belongs to the HIV-1 VPU protein family. Homopentamer. Interacts with host CD4 and BRTC; these interactions induce proteasomal degradation of CD4. Interacts with host BST2; this interaction leads to the degradation of host BST2. Interacts with host FBXW11. Interacts with host AP1M1; this interaction plays a role in the mistrafficking and subsequent degradation of host BST2. Interacts with host RANBP2; this interaction allows Vpu to down-regulate host BLM sumoylation. In terms of processing, phosphorylated by host CK2. This phosphorylation is necessary for interaction with human BTRC and degradation of CD4.

Its subcellular location is the host membrane. With respect to regulation, ion channel activity is inhibited by hexamethylene amiloride in vitro. Its function is as follows. Enhances virion budding by targeting host CD4 and Tetherin/BST2 to proteasome degradation. Degradation of CD4 prevents any unwanted premature interactions between viral Env and its host receptor CD4 in the endoplasmic reticulum. Degradation of antiretroviral protein Tetherin/BST2 is important for virion budding, as BST2 tethers new viral particles to the host cell membrane. Mechanistically, Vpu bridges either CD4 or BST2 to BTRC, a substrate recognition subunit of the Skp1/Cullin/F-box protein E3 ubiquitin ligase, induces their ubiquitination and subsequent proteasomal degradation. The alteration of the E3 ligase specificity by Vpu seems to promote the degradation of host IKBKB, leading to NF-kappa-B down-regulation and subsequent apoptosis. Acts as a viroporin that forms an oligomeric ion channel in membranes. Modulates the host DNA repair mechanisms to promote degradation of nuclear viral cDNA in cells that are already productively infected in order to suppress immune sensing and proviral hyper-integration (superinfection). Manipulates PML-NBs and modulates SUMOylation of host BLM protein thereby enhancing its DNA-end processing activity toward viral unintegrated linear DNA. Also inhibits RAD52-mediated homologous repair of viral cDNA, preventing the generation of dead-end circular forms of single copies of the long terminal repeat and permitting sustained nucleolytic attack. This is Protein Vpu from Human immunodeficiency virus type 1 group N (isolate YBF30) (HIV-1).